The primary structure comprises 398 residues: Cell cycle checkpoint control protein RAD9B (398 aa).

Polar residues predominate over residues 272-281 (RTSSPQSLRL). The disordered stretch occupies residues 272 to 359 (RTSSPQSLRL…DMEEGQSPSP (88 aa)). Over residues 324-336 (SSSAAETRRASAS) the composition is skewed to low complexity. Ser349 and Ser358 each carry phosphoserine.

The protein belongs to the rad9 family. In terms of assembly, interacts with HUS1, HUS1B, RAD1, RAD9A and RAD17.

The protein is Cell cycle checkpoint control protein RAD9B (Rad9b) of Rattus norvegicus (Rat).